Consider the following 101-residue polypeptide: Urease subunit beta (101 aa).

It belongs to the urease beta subunit family. In terms of assembly, heterotrimer of UreA (gamma), UreB (beta) and UreC (alpha) subunits. Three heterotrimers associate to form the active enzyme.

The protein localises to the cytoplasm. The catalysed reaction is urea + 2 H2O + H(+) = hydrogencarbonate + 2 NH4(+). Its pathway is nitrogen metabolism; urea degradation; CO(2) and NH(3) from urea (urease route): step 1/1. The protein is Urease subunit beta of Ectopseudomonas mendocina (strain ymp) (Pseudomonas mendocina).